A 640-amino-acid chain; its full sequence is Threonine--tRNA ligase (640 aa).

In terms of domain architecture, TGS spans 1-61 (MPIITLPNGD…TEDSTLQIIT (61 aa)). Positions 242–533 (DHRKIGKALD…LIEHYAGFMP (292 aa)) are catalytic. Zn(2+) contacts are provided by cysteine 333, histidine 384, and histidine 510.

Belongs to the class-II aminoacyl-tRNA synthetase family. Homodimer. Requires Zn(2+) as cofactor.

The protein resides in the cytoplasm. It catalyses the reaction tRNA(Thr) + L-threonine + ATP = L-threonyl-tRNA(Thr) + AMP + diphosphate + H(+). Functionally, catalyzes the attachment of threonine to tRNA(Thr) in a two-step reaction: L-threonine is first activated by ATP to form Thr-AMP and then transferred to the acceptor end of tRNA(Thr). Also edits incorrectly charged L-seryl-tRNA(Thr). This is Threonine--tRNA ligase from Acinetobacter baumannii (strain SDF).